Reading from the N-terminus, the 726-residue chain is PTS system glucose-specific EIICBA component (726 aa).

The 453-residue stretch at 1–453 folds into the PTS EIIC type-1 domain; that stretch reads MMKDTFKNVL…FNYATPGRNG (453 aa). Helical transmembrane passes span 18 to 38, 62 to 82, 90 to 110, 139 to 159, 184 to 204, 311 to 331, 344 to 364, 365 to 385, and 419 to 439; these read FGKA…MISI, IGWG…GGSW, AFAA…IFGV, VLEA…GFVG, FVPF…AAFW, FKVG…VAIY, GMMI…PIEY, MFMF…GAAF, and IVNF…IANF. The PTS EIIB type-1 domain maps to 473-555; the sequence is GSQAVNIINL…QDILDSGEII (83 aa). The Phosphocysteine intermediate; for EIIB activity role is filled by cysteine 495. A PTS EIIA type-1 domain is found at 596 to 700; the sequence is DPVFAQKMMG…ETSTVVVFTN (105 aa). Histidine 648 serves as the catalytic Tele-phosphohistidine intermediate; for EIIA activity.

The protein resides in the cell membrane. It carries out the reaction N(pros)-phospho-L-histidyl-[protein] + D-glucose(out) = D-glucose 6-phosphate(in) + L-histidyl-[protein]. Functionally, the phosphoenolpyruvate-dependent sugar phosphotransferase system (sugar PTS), a major carbohydrate active transport system, catalyzes the phosphorylation of incoming sugar substrates concomitantly with their translocation across the cell membrane. This system is involved in glucose transport. This Streptococcus pneumoniae serotype 4 (strain ATCC BAA-334 / TIGR4) protein is PTS system glucose-specific EIICBA component (exp5).